We begin with the raw amino-acid sequence, 614 residues long: FAD-linked oxidoreductase ffsJ (614 aa).

The signal sequence occupies residues 1 to 19; it reads MRLTRALTPAILALPAAHA. Residues Asn-30, Asn-53, Asn-72, and Asn-114 are each glycosylated (N-linked (GlcNAc...) asparagine). Residues 119-301 form the FAD-binding PCMH-type domain; that stretch reads TGSLPAYYID…LSSTHRVEPE (183 aa). Asn-314, Asn-329, Asn-461, Asn-465, Asn-478, and Asn-514 each carry an N-linked (GlcNAc...) asparagine glycan. Residues 453–495 form a disordered region; the sequence is NGHGRSNNNNSNNSSTSTSTSTSSKNGSVKPYAYGGKETTSST. Over residues 456–480 the composition is skewed to low complexity; sequence GRSNNNNSNNSSTSTSTSTSSKNGS.

It belongs to the oxygen-dependent FAD-linked oxidoreductase family. Requires FAD as cofactor.

It participates in mycotoxin biosynthesis. Its function is as follows. FAD-linked oxidoreductase; part of the gene cluster that mediates the biosynthesis of the cytotoxic leucine-containing cytochalasans, including aspochalasin C, aspochalasin E, TMC-169, flavichalasine F, aspergillin PZ, aspochalasin M and flavichalasine G. The first step in the pathway is catalyzed by the hybrid PKS-NRPS ffsA that utilizes 8 units of malonyl-CoA to iteratively assemble the octaketide chain before addition of L-leucine by the C-terminal NRPS modules. Because ffsA lacks a designated enoylreductase (ER) domain, the required activity is provided the enoyl reductase fssC. The methyltransferase (MT) domain of ffsA catalyzes the alpha-methylation at C10 and C14 using S-adenosyl-L-methionine as the methyl-donating cosubstrate. Reduction by the hydrolyase ffsE, followed by dehydration and intra-molecular Diels-Alder cyclization by the Diels-Alderase ffsF then yield the required isoindolone-fused macrocycle. A number of oxidative steps catalyzed by the tailoring cytochrome P450 monooxygenase ffsD, the FAD-linked oxidoreductase ffsJ and the short-chain dehydrogenase/reductase ffsI, are further required to afford the final products. The sequence is that of FAD-linked oxidoreductase ffsJ from Aspergillus flavipes.